The sequence spans 603 residues: DNA mismatch repair protein MutL (603 aa).

This sequence belongs to the DNA mismatch repair MutL/HexB family.

Functionally, this protein is involved in the repair of mismatches in DNA. It is required for dam-dependent methyl-directed DNA mismatch repair. May act as a 'molecular matchmaker', a protein that promotes the formation of a stable complex between two or more DNA-binding proteins in an ATP-dependent manner without itself being part of a final effector complex. This is DNA mismatch repair protein MutL from Rhodopseudomonas palustris (strain BisA53).